We begin with the raw amino-acid sequence, 1679 residues long: Probable myosin heavy chain ECU04_1000 (1679 aa).

A compositionally biased stretch (polar residues) spans 1–14; that stretch reads MEGTTNKDIGSGSS. The interval 1–22 is disordered; the sequence is MEGTTNKDIGSGSSRPGGEVSV. Residues 31 to 79 form the Myosin N-terminal SH3-like domain; it reads MEKKWVWAPSSKEAYVCGFVVKEEGDVLEIDCRGVIVRHKSCEVFRMNP. A Myosin motor domain is found at 83–754; it reads DMVDDLAELS…VLADIEDMRD (672 aa). 176 to 183 serves as a coordination point for ATP; that stretch reads GESGAGKT. Residues 624–646 are actin-binding; it reads LASLMSELRRTNPHFVRCIIPNL. A coiled-coil region spans residues 823–1644; it reads GEMKEKEAMI…SKMLEMKKKL (822 aa).

This sequence belongs to the TRAFAC class myosin-kinesin ATPase superfamily. Myosin family.

Functionally, cellular myosin that appears to play a role in cytokinesis, cell shape, and specialized functions such as secretion and capping. This chain is Probable myosin heavy chain ECU04_1000, found in Encephalitozoon cuniculi (strain GB-M1) (Microsporidian parasite).